The chain runs to 584 residues: Chondroitin proteoglycan 1 (584 aa).

An N-terminal signal peptide occupies residues 1 to 17 (MTLKPVLLAFLVASAYA). Residue serine 50 is glycosylated (O-linked (Xyl...) (chondroitin sulfate) serine). Chitin-binding type-2 domains lie at 58-115 (DTDC…QCGG), 211-268 (TKSC…ECTN), and 524-578 (VPAC…ECHQ). Intrachain disulfides connect cysteine 91–cysteine 104 and cysteine 244–cysteine 257. The disordered stretch occupies residues 267-295 (TNGSGNDEGSADETTPESSGEMPYSNGYG). Asparagine 268 is a glycosylation site (N-linked (GlcNAc...) asparagine). Cysteine 554 and cysteine 567 are joined by a disulfide.

As to expression, expressed in the germline.

Required for polar body extrusion during cytokinesis in embryo development. Affects cortical granule size. Has roles in meiotic chromosome segregation, osmotic barrier function and polarization in conjunction with cpg-2. Binds chitin. The chain is Chondroitin proteoglycan 1 (cpg-1) from Caenorhabditis elegans.